The sequence spans 282 residues: Probable septum site-determining protein MinC (282 aa).

The tract at residues Ala-108–Ala-127 is disordered. Residues Ala-118–Ala-127 show a composition bias toward low complexity.

This sequence belongs to the MinC family. In terms of assembly, interacts with MinD and FtsZ.

Cell division inhibitor that blocks the formation of polar Z ring septums. Rapidly oscillates between the poles of the cell to destabilize FtsZ filaments that have formed before they mature into polar Z rings. Prevents FtsZ polymerization. The chain is Probable septum site-determining protein MinC from Paraburkholderia xenovorans (strain LB400).